The sequence spans 1159 residues: RNA-directed RNA polymerase (1159 aa).

The region spanning 545–727 is the RdRp catalytic domain; the sequence is LTYGVLAEDT…KALASYTGLE (183 aa).

The protein belongs to the reoviridae RNA-directed RNA polymerase family. As to quaternary structure, interacts with VP3 (Potential). Interacts with VP2 (Potential). Interacts with NSP5; this interaction is probably necessary for the formation of functional virus factories.

It is found in the virion. It carries out the reaction RNA(n) + a ribonucleoside 5'-triphosphate = RNA(n+1) + diphosphate. In terms of biological role, RNA-directed RNA polymerase that is involved in both transcription and genome replication. Together with VP3 capping enzyme, forms an enzyme complex positioned near the channels situated at each of the five-fold vertices of the core. Following infection, the outermost layer of the virus is lost, leaving a double-layered particle (DLP) made up of the core and VP6 shell. VP1 then catalyzes the transcription of fully conservative plus-strand genomic RNAs that are extruded through the DLP's channels into the cytoplasm where they function as mRNAs for translation of viral proteins. One copy of each of the viral (+)RNAs is also recruited during core assembly, together with newly synthesized polymerase complexes and VP2. The polymerase of these novo-formed particles catalyzes the synthesis of complementary minus-strands leading to dsDNA formation. To do so, the polymerase specifically recognizes conserved 3' sequence(s) in plus-strand RNA templates. Once dsRNA synthesis is complete, the polymerase switches to the transcriptional mode, thus providing secondary transcription. This is RNA-directed RNA polymerase from Homo sapiens (Human).